Reading from the N-terminus, the 200-residue chain is Type 1 fimbriae regulatory protein FimB (200 aa).

One can recognise a Tyr recombinase domain in the interval 8-189; the sequence is KKRNFLTHSE…NAGRFYGIWD (182 aa). Catalysis depends on residues arginine 47, lysine 72, histidine 141, arginine 144, and histidine 167. The O-(3'-phospho-DNA)-tyrosine intermediate role is filled by tyrosine 176.

Belongs to the 'phage' integrase family.

Functionally, fimB is one of the 2 regulatory proteins which control the phase variation of type 1 fimbriae in E.coli. These proteins mediate the periodic inversion of a 300bp DNA segment that harbors the promoter for the fimbrial structural gene, fimA. FimB switches fimA on. The polypeptide is Type 1 fimbriae regulatory protein FimB (fimB) (Escherichia coli O157:H7).